Reading from the N-terminus, the 177-residue chain is Putative pre-16S rRNA nuclease (177 aa).

The protein belongs to the YqgF nuclease family.

Its subcellular location is the cytoplasm. Functionally, could be a nuclease involved in processing of the 5'-end of pre-16S rRNA. This chain is Putative pre-16S rRNA nuclease, found in Psychrobacter arcticus (strain DSM 17307 / VKM B-2377 / 273-4).